The chain runs to 85 residues: MKVTLIAILTCAAVLVLHTTAAEELEAESQLMEVGMPDTELAAVDEERLFKCSVSCEIEKEGNRDCKKKKCKGGWKCKFNMCVKV.

An N-terminal signal peptide occupies residues 1–22 (MKVTLIAILTCAAVLVLHTTAA). Positions 23–48 (EELEAESQLMEVGMPDTELAAVDEER) are excised as a propeptide. 3 disulfide bridges follow: Cys52–Cys66, Cys56–Cys77, and Cys71–Cys82.

Belongs to the neurotoxin 12 (Hwtx-2) family. 02 (Hwtx-2) subfamily. Expressed by the venom gland.

Its subcellular location is the secreted. Its function is as follows. Postsynaptic neurotoxin. This is U4-theraphotoxin-Hhn1r from Cyriopagopus hainanus (Chinese bird spider).